A 218-amino-acid chain; its full sequence is Probable nicotinate-nucleotide adenylyltransferase (218 aa).

Belongs to the NadD family.

The enzyme catalyses nicotinate beta-D-ribonucleotide + ATP + H(+) = deamido-NAD(+) + diphosphate. It functions in the pathway cofactor biosynthesis; NAD(+) biosynthesis; deamido-NAD(+) from nicotinate D-ribonucleotide: step 1/1. In terms of biological role, catalyzes the reversible adenylation of nicotinate mononucleotide (NaMN) to nicotinic acid adenine dinucleotide (NaAD). The chain is Probable nicotinate-nucleotide adenylyltransferase from Burkholderia cenocepacia (strain ATCC BAA-245 / DSM 16553 / LMG 16656 / NCTC 13227 / J2315 / CF5610) (Burkholderia cepacia (strain J2315)).